We begin with the raw amino-acid sequence, 142 residues long: MAP3K7 C-terminal-like protein (142 aa).

In terms of tissue distribution, ubiquitous.

The sequence is that of MAP3K7 C-terminal-like protein (Map3k7cl) from Mus musculus (Mouse).